The chain runs to 414 residues: Protein PHLOEM PROTEIN 2-LIKE A10 (414 aa).

The next 2 membrane-spanning stretches (helical) occupy residues 20–40 (WLIF…VYHL) and 379–399 (YVGA…LHII).

Its subcellular location is the membrane. This chain is Protein PHLOEM PROTEIN 2-LIKE A10 (PP2A10), found in Arabidopsis thaliana (Mouse-ear cress).